The chain runs to 1269 residues: DNA-directed RNA polymerase subunit beta'' (1269 aa).

Cysteine 226, cysteine 301, cysteine 308, and cysteine 311 together coordinate Zn(2+).

The protein belongs to the RNA polymerase beta' chain family. RpoC2 subfamily. As to quaternary structure, in plastids the minimal PEP RNA polymerase catalytic core is composed of four subunits: alpha, beta, beta', and beta''. When a (nuclear-encoded) sigma factor is associated with the core the holoenzyme is formed, which can initiate transcription. The cofactor is Zn(2+).

Its subcellular location is the plastid. It localises to the chloroplast. It catalyses the reaction RNA(n) + a ribonucleoside 5'-triphosphate = RNA(n+1) + diphosphate. Its function is as follows. DNA-dependent RNA polymerase catalyzes the transcription of DNA into RNA using the four ribonucleoside triphosphates as substrates. This chain is DNA-directed RNA polymerase subunit beta'', found in Cyanidium caldarium (Red alga).